The following is a 50-amino-acid chain: Large ribosomal subunit protein bL36B (50 aa).

This sequence belongs to the bacterial ribosomal protein bL36 family.

This Pseudomonas aeruginosa (strain UCBPP-PA14) protein is Large ribosomal subunit protein bL36B.